The chain runs to 199 residues: Recombination protein RecR (199 aa).

The C4-type zinc finger occupies 57-72; sequence CRQCRTLTEDELCPQC. The region spanning 80–174 is the Toprim domain; sequence SLLCVVQSPV…TISRIAHGVP (95 aa).

It belongs to the RecR family.

Functionally, may play a role in DNA repair. It seems to be involved in an RecBC-independent recombinational process of DNA repair. It may act with RecF and RecO. This Stutzerimonas stutzeri (strain A1501) (Pseudomonas stutzeri) protein is Recombination protein RecR.